Consider the following 75-residue polypeptide: Vacuolar ATPase assembly integral membrane protein VMA21 (75 aa).

Residues 1-8 (MPVDVAPG) lie on the Cytoplasmic side of the membrane. A helical transmembrane segment spans residues 9-29 (VIKKLMFFTAAMVICPLLTFF). Residues 30-41 (SIKQFTTNTIVS) are Lumenal-facing. Residues 42-62 (GGLAALAANLVLIGYIVVAFM) form a helical membrane-spanning segment. The Cytoplasmic portion of the chain corresponds to 63–75 (EDTTDVKAESKKD).

It belongs to the VMA21 family.

Its subcellular location is the endoplasmic reticulum membrane. The protein localises to the endoplasmic reticulum-Golgi intermediate compartment membrane. It is found in the cytoplasmic vesicle. It localises to the COPII-coated vesicle membrane. Required for the assembly of the V0 complex of the vacuolar ATPase (V-ATPase) in the endoplasmic reticulum. The chain is Vacuolar ATPase assembly integral membrane protein VMA21 from Vanderwaltozyma polyspora (strain ATCC 22028 / DSM 70294 / BCRC 21397 / CBS 2163 / NBRC 10782 / NRRL Y-8283 / UCD 57-17) (Kluyveromyces polysporus).